The chain runs to 137 residues: uncharacterized protein (137 aa).

This is an uncharacterized protein from Mycoplasma genitalium (strain ATCC 33530 / DSM 19775 / NCTC 10195 / G37) (Mycoplasmoides genitalium).